We begin with the raw amino-acid sequence, 692 residues long: DNA-binding protein RFX2 (692 aa).

The interval Met1–Ser26 is disordered. Ser26 is modified (phosphoserine). A DNA-binding region (RFX-type winged-helix) is located at residues Thr169 to Pro244. Positions Arg261 to Ala296 are disordered. The span at Ala285–Glu294 shows a compositional bias: polar residues. Ser386 carries the phosphoserine modification. The segment covering Asp660–Pro685 has biased composition (basic and acidic residues). Residues Asp660–Ile692 form a disordered region.

It belongs to the RFX family. As to quaternary structure, homodimer; probably only forms homodimers in testis. Heterodimer; heterodimerizes with RFX1 and RFX3. In terms of tissue distribution, expressed at highest level in testis. Expressed at lower level in thymus. Also expressed in stomach, kidney, liver, brain and heart. Weakly expressed in spleen and lung. Within testis, most abundantly present in spermatocytes: present from pachytene spermatocytes to early spermatids (at protein level). Also present in non-germinal tissues.

Its subcellular location is the nucleus. It localises to the cytoplasm. Its function is as follows. Transcription factor that acts as a key regulator of spermatogenesis. Acts by regulating expression of genes required for the haploid phase during spermiogenesis, such as genes required for cilium assembly and function. Recognizes and binds the X-box, a regulatory motif with DNA sequence 5'-GTNRCC(0-3N)RGYAAC-3' present on promoters. Probably activates transcription of the testis-specific histone gene H1-6. In Rattus norvegicus (Rat), this protein is DNA-binding protein RFX2 (Rfx2).